Reading from the N-terminus, the 144-residue chain is Granulocyte-macrophage colony-stimulating factor (144 aa).

Positions 1–17 (MWLQSLLLLGTVACSIS) are cleaved as a signal peptide. 3 O-linked (GalNAc...) serine glycosylation sites follow: Ser-22, Ser-24, and Ser-26. O-linked (GalNAc...) threonine; partial glycosylation is present at Thr-27. Asn-44 and Asn-54 each carry an N-linked (GlcNAc...) asparagine glycan. 2 disulfide bridges follow: Cys-71–Cys-113 and Cys-105–Cys-138.

It belongs to the GM-CSF family. As to quaternary structure, monomer. The signaling GM-CSF receptor complex is a dodecamer of two head-to-head hexamers of two alpha, two beta, and two ligand subunits.

The protein resides in the secreted. Functionally, cytokine that stimulates the growth and differentiation of hematopoietic precursor cells from various lineages, including granulocytes, macrophages, eosinophils and erythrocytes. This Homo sapiens (Human) protein is Granulocyte-macrophage colony-stimulating factor (CSF2).